A 231-amino-acid polypeptide reads, in one-letter code: Mediator of RNA polymerase II transcription subunit 18 (231 aa).

Residues 191–218 are a coiled coil; it reads HLTDIEALNKAVKELEKVKTELHGLMNL.

It belongs to the Mediator complex subunit 18 family. In terms of assembly, component of the Mediator complex.

It localises to the nucleus. In terms of biological role, component of the Mediator complex, a coactivator involved in the regulated transcription of nearly all RNA polymerase II-dependent genes. Mediator functions as a bridge to convey information from gene-specific regulatory proteins to the basal RNA polymerase II transcription machinery. Mediator is recruited to promoters by direct interactions with regulatory proteins and serves as a scaffold for the assembly of a functional preinitiation complex with RNA polymerase II and the general transcription factors. The protein is Mediator of RNA polymerase II transcription subunit 18 (SRB5) of Yarrowia lipolytica (strain CLIB 122 / E 150) (Yeast).